Consider the following 61-residue polypeptide: UPF0434 protein Bpet2671 (61 aa).

This sequence belongs to the UPF0434 family.

The protein is UPF0434 protein Bpet2671 of Bordetella petrii (strain ATCC BAA-461 / DSM 12804 / CCUG 43448).